A 107-amino-acid chain; its full sequence is Growth-regulated alpha protein (107 aa).

The N-terminal stretch at 1-34 (MARAALSAAPSNPRLLRVALLLLLLVAAGRRAAG) is a signal peptide. Disulfide bonds link Cys43–Cys69 and Cys45–Cys85.

This sequence belongs to the intercrine alpha (chemokine CxC) family. N-terminal processed forms GRO-alpha(4-73), GRO-alpha(5-73) and GRO-alpha(6-73) are produced by proteolytic cleavage after secretion from peripheral blood monocytes.

It localises to the secreted. Functionally, has chemotactic activity for neutrophils. May play a role in inflammation and exerts its effects on endothelial cells in an autocrine fashion. In vitro, the processed forms GRO-alpha(4-73), GRO-alpha(5-73) and GRO-alpha(6-73) show a 30-fold higher chemotactic activity. This is Growth-regulated alpha protein (CXCL1) from Homo sapiens (Human).